We begin with the raw amino-acid sequence, 325 residues long: DNA repair and recombination protein RadA (325 aa).

Glycine 107–threonine 114 contacts ATP.

The protein belongs to the eukaryotic RecA-like protein family.

Functionally, involved in DNA repair and in homologous recombination. Binds and assemble on single-stranded DNA to form a nucleoprotein filament. Hydrolyzes ATP in a ssDNA-dependent manner and promotes DNA strand exchange between homologous DNA molecules. The polypeptide is DNA repair and recombination protein RadA (Methanosarcina barkeri (strain Fusaro / DSM 804)).